Consider the following 313-residue polypeptide: Olfactory receptor 51A4 (313 aa).

The Extracellular portion of the chain corresponds to 1–27 (MSIINTSYVEITTFFLVGMPGLEYAHI). Residue N5 is glycosylated (N-linked (GlcNAc...) asparagine). Residues 28–48 (WISIPICSMYLIAILGNGTIL) traverse the membrane as a helical segment. Over 49 to 56 (FIIKTEPS) the chain is Cytoplasmic. Residues 57-77 (LHEPMYYFLSMLAMSDLGLSL) form a helical membrane-spanning segment. Topologically, residues 78 to 101 (SSLPTVLSIFLFNAPEISSNACFA) are extracellular. C99 and C191 are oxidised to a cystine. The chain crosses the membrane as a helical span at residues 102–122 (QEFFIHGFSVLESSVLLIMSF). Residues 123-141 (DRFLAIHNPLRYTSILTTV) lie on the Cytoplasmic side of the membrane. Residues 142–162 (RVAQIGIVFSFKSMLLVLPFP) form a helical membrane-spanning segment. The Extracellular portion of the chain corresponds to 163-198 (FTLRNLRYCKKNQLSHSYCLHQDVMKLACSDNRIDV). The helical transmembrane segment at 199-218 (IYGFFGALCLMVDFILIAVS) threads the bilayer. Topologically, residues 219 to 238 (YTLILKTVLGIASKKEQLKA) are cytoplasmic. The helical transmembrane segment at 239 to 259 (LNTCVSHICAVIIFYLPIINL) threads the bilayer. The Extracellular portion of the chain corresponds to 260–274 (AVVHRFARHVSPLIN). The helical transmembrane segment at 275–295 (VLMANVLLLVPPLTNPIVYCV) threads the bilayer. Over 296 to 313 (KTKQIRVRVVAKLCQRKI) the chain is Cytoplasmic.

It belongs to the G-protein coupled receptor 1 family.

The protein localises to the cell membrane. Its function is as follows. Odorant receptor. The sequence is that of Olfactory receptor 51A4 (OR51A4) from Homo sapiens (Human).